Consider the following 279-residue polypeptide: Diaminopimelate epimerase (279 aa).

Substrate is bound by residues asparagine 12, glutamine 45, and asparagine 65. Cysteine 74 serves as the catalytic Proton donor. Substrate-binding positions include 75-76, asparagine 162, asparagine 195, and 213-214; these read GN and ER. Cysteine 222 serves as the catalytic Proton acceptor. Residue 223–224 participates in substrate binding; that stretch reads GS.

Belongs to the diaminopimelate epimerase family. Homodimer.

Its subcellular location is the cytoplasm. The catalysed reaction is (2S,6S)-2,6-diaminopimelate = meso-2,6-diaminopimelate. The protein operates within amino-acid biosynthesis; L-lysine biosynthesis via DAP pathway; DL-2,6-diaminopimelate from LL-2,6-diaminopimelate: step 1/1. Catalyzes the stereoinversion of LL-2,6-diaminopimelate (L,L-DAP) to meso-diaminopimelate (meso-DAP), a precursor of L-lysine and an essential component of the bacterial peptidoglycan. In Shewanella loihica (strain ATCC BAA-1088 / PV-4), this protein is Diaminopimelate epimerase.